The following is a 312-amino-acid chain: Methionyl-tRNA formyltransferase (312 aa).

111–114 serves as a coordination point for (6S)-5,6,7,8-tetrahydrofolate; that stretch reads SLLP.

The protein belongs to the Fmt family.

The enzyme catalyses L-methionyl-tRNA(fMet) + (6R)-10-formyltetrahydrofolate = N-formyl-L-methionyl-tRNA(fMet) + (6S)-5,6,7,8-tetrahydrofolate + H(+). Functionally, attaches a formyl group to the free amino group of methionyl-tRNA(fMet). The formyl group appears to play a dual role in the initiator identity of N-formylmethionyl-tRNA by promoting its recognition by IF2 and preventing the misappropriation of this tRNA by the elongation apparatus. This Rhodopseudomonas palustris (strain HaA2) protein is Methionyl-tRNA formyltransferase.